The following is a 349-amino-acid chain: Hydroxymethylglutaryl-CoA synthase (349 aa).

(3S)-3-hydroxy-3-methylglutaryl-CoA-binding residues include Asp-30 and Ala-31. Catalysis depends on Glu-82, which acts as the Proton donor/acceptor. The (3S)-3-hydroxy-3-methylglutaryl-CoA site is built by Cys-114 and Thr-155. Residue Cys-114 is the Acyl-thioester intermediate of the active site. Arg-203 is a binding site for CoA. 2 residues coordinate (3S)-3-hydroxy-3-methylglutaryl-CoA: Thr-205 and His-238. The active-site Proton donor/acceptor is His-238. A CoA-binding site is contributed by Lys-243. The (3S)-3-hydroxy-3-methylglutaryl-CoA site is built by Asn-270 and Ser-300.

The protein belongs to the thiolase-like superfamily. Archaeal HMG-CoA synthase family. In terms of assembly, interacts with acetoacetyl-CoA thiolase that catalyzes the precedent step in the pathway and with a DUF35 protein. The acetoacetyl-CoA thiolase/HMG-CoA synthase complex channels the intermediate via a fused CoA-binding site, which allows for efficient coupling of the endergonic thiolase reaction with the exergonic HMGCS reaction.

It carries out the reaction acetoacetyl-CoA + acetyl-CoA + H2O = (3S)-3-hydroxy-3-methylglutaryl-CoA + CoA + H(+). It participates in metabolic intermediate biosynthesis; (R)-mevalonate biosynthesis; (R)-mevalonate from acetyl-CoA: step 2/3. Its function is as follows. Catalyzes the condensation of acetyl-CoA with acetoacetyl-CoA to form 3-hydroxy-3-methylglutaryl-CoA (HMG-CoA). Functions in the mevalonate (MVA) pathway leading to isopentenyl diphosphate (IPP), a key precursor for the biosynthesis of isoprenoid compounds that are building blocks of archaeal membrane lipids. This Methanococcus vannielii (strain ATCC 35089 / DSM 1224 / JCM 13029 / OCM 148 / SB) protein is Hydroxymethylglutaryl-CoA synthase.